The chain runs to 612 residues: Bile salt-activated lipase (612 aa).

Residues 1-20 (MGRLEVLFLGLTCCLAAACA) form the signal peptide. Cys-84 and Cys-100 are disulfide-bonded. Asn-207 is a glycosylation site (N-linked (GlcNAc...) asparagine). Ser-214 acts as the Acyl-ester intermediate in catalysis. Residues Cys-266 and Cys-277 are joined by a disulfide bond. Residues Asp-340 and His-455 each act as charge relay system in the active site. The disordered stretch occupies residues 553-612 (VGDHTPPEDDSEAAPVPPTDDSQGGPVPPTDDSQTTPVPPTDNSQAGDSVEAQMPGPIGF). 4 tandem repeats follow at residues 556 to 566 (HTPPEDDSEAA), 567 to 577 (PVPPTDDSQGG), 578 to 588 (PVPPTDDSQTT), and 589 to 599 (PVPPTDNSQAG). A 4 X 11 AA tandem repeats, O-glycosylated region region spans residues 556 to 599 (HTPPEDDSEAAPVPPTDDSQGGPVPPTDDSQTTPVPPTDNSQAG). Residues 583-599 (DDSQTTPVPPTDNSQAG) show a composition bias toward polar residues.

This sequence belongs to the type-B carboxylesterase/lipase family. As to quaternary structure, interacts with CLC. In terms of tissue distribution, synthesized primarily in the pancreas and then transported to the intestine.

The protein resides in the secreted. The enzyme catalyses a triacylglycerol + H2O = a diacylglycerol + a fatty acid + H(+). It catalyses the reaction 1,2,3-tri-(9Z-octadecenoyl)-glycerol + H2O = di-(9Z)-octadecenoylglycerol + (9Z)-octadecenoate + H(+). It carries out the reaction 1,2,3-trioctanoylglycerol + H2O = dioctanoylglycerol + octanoate + H(+). The catalysed reaction is a sterol ester + H2O = a sterol + a fatty acid + H(+). The enzyme catalyses cholesteryl (9Z-octadecenoate) + H2O = cholesterol + (9Z)-octadecenoate + H(+). It catalyses the reaction an acetyl ester + H2O = an aliphatic alcohol + acetate + H(+). It carries out the reaction a butanoate ester + H2O = an aliphatic alcohol + butanoate + H(+). The catalysed reaction is 9-hexadecanoyloxy-octadecanoate + H2O = 9-hydroxy-octadecanoate + hexadecanoate + H(+). The enzyme catalyses 9-(9Z-octadecenoyloxy)-octadecanoate + H2O = 9-hydroxy-octadecanoate + (9Z)-octadecenoate + H(+). It catalyses the reaction 1-hexadecanoyl-sn-glycero-3-phosphocholine + H2O = sn-glycerol 3-phosphocholine + hexadecanoate + H(+). It carries out the reaction 12-hexadecanoyloxy-octadecanoate + H2O = 12-hydroxyoctadecanoate + hexadecanoate + H(+). The catalysed reaction is 12-(9Z-octadecenoyloxy)-octadecanoate + H2O = 12-hydroxyoctadecanoate + (9Z)-octadecenoate + H(+). The enzyme catalyses 13-(9Z-octadecenoyloxy)-octadecanoate + H2O = 13-hydroxy-octadecanoate + (9Z)-octadecenoate + H(+). It catalyses the reaction 9-(9Z-hexadecenoyloxy)-octadecanoate + H2O = (9Z)-hexadecenoate + 9-hydroxy-octadecanoate + H(+). It carries out the reaction 12-(9Z-hexadecenoyloxy)-octadecanoate + H2O = 12-hydroxyoctadecanoate + (9Z)-hexadecenoate + H(+). The catalysed reaction is 13-(9Z-hexadecenoyloxy)-octadecanoate + H2O = 13-hydroxy-octadecanoate + (9Z)-hexadecenoate + H(+). The enzyme catalyses 12-octadecanoyloxy-octadecanoate + H2O = 12-hydroxyoctadecanoate + octadecanoate + H(+). It catalyses the reaction 13-octadecanoyloxy-octadecanoate + H2O = 13-hydroxy-octadecanoate + octadecanoate + H(+). It carries out the reaction 5-(9Z-hexadecenoyloxy)-octadecanoate + H2O = 5-hydroxy-octadecanoate + (9Z)-hexadecenoate + H(+). The catalysed reaction is 9-octadecanoyloxy-octadecanoate + H2O = 9-hydroxy-octadecanoate + octadecanoate + H(+). Activated by bile salts such as sodium taurocholate. Catalyzes the hydrolysis of a wide range of substrates including cholesteryl esters, phospholipids, lysophospholipids, di- and tri-acylglycerols, and fatty acid esters of hydroxy fatty acids (FAHFA). Preferentially hydrolyzes FAHFAs with the ester bond further away from the carboxylate. Unsaturated FAHFAs are hydrolyzed more quickly than saturated FAHFAs. Has an essential role in the complete digestion of dietary lipids and their intestinal absorption, along with the absorption of fat-soluble vitamins. The sequence is that of Bile salt-activated lipase (Cel) from Rattus norvegicus (Rat).